The following is a 434-amino-acid chain: UDP-N-acetylglucosamine 1-carboxyvinyltransferase (434 aa).

22-23 serves as a coordination point for phosphoenolpyruvate; it reads KN. Arginine 97 serves as a coordination point for UDP-N-acetyl-alpha-D-glucosamine. Residue aspartate 121 is the Proton donor of the active site. Positions 319 and 341 each coordinate UDP-N-acetyl-alpha-D-glucosamine.

Belongs to the EPSP synthase family. MurA subfamily.

The protein resides in the cytoplasm. It catalyses the reaction phosphoenolpyruvate + UDP-N-acetyl-alpha-D-glucosamine = UDP-N-acetyl-3-O-(1-carboxyvinyl)-alpha-D-glucosamine + phosphate. It participates in cell wall biogenesis; peptidoglycan biosynthesis. Functionally, cell wall formation. Adds enolpyruvyl to UDP-N-acetylglucosamine. This Bacteroides fragilis (strain ATCC 25285 / DSM 2151 / CCUG 4856 / JCM 11019 / LMG 10263 / NCTC 9343 / Onslow / VPI 2553 / EN-2) protein is UDP-N-acetylglucosamine 1-carboxyvinyltransferase.